The following is a 112-amino-acid chain: SPbeta prophage-derived uncharacterized protein YoqB (112 aa).

The protein is SPbeta prophage-derived uncharacterized protein YoqB (yoqB) of Bacillus subtilis (strain 168).